Here is a 341-residue protein sequence, read N- to C-terminus: Ribosomal RNA small subunit methyltransferase H (341 aa).

S-adenosyl-L-methionine is bound by residues 47–49, D64, F91, D109, and Q116; that span reads GGY.

The protein belongs to the methyltransferase superfamily. RsmH family.

The protein resides in the cytoplasm. The catalysed reaction is cytidine(1402) in 16S rRNA + S-adenosyl-L-methionine = N(4)-methylcytidine(1402) in 16S rRNA + S-adenosyl-L-homocysteine + H(+). In terms of biological role, specifically methylates the N4 position of cytidine in position 1402 (C1402) of 16S rRNA. The protein is Ribosomal RNA small subunit methyltransferase H of Rhizobium johnstonii (strain DSM 114642 / LMG 32736 / 3841) (Rhizobium leguminosarum bv. viciae).